Here is a 331-residue protein sequence, read N- to C-terminus: Phenylalanine--tRNA ligase alpha subunit (331 aa).

Glu256 lines the Mg(2+) pocket.

Belongs to the class-II aminoacyl-tRNA synthetase family. Phe-tRNA synthetase alpha subunit type 1 subfamily. In terms of assembly, tetramer of two alpha and two beta subunits. The cofactor is Mg(2+).

The protein localises to the cytoplasm. It catalyses the reaction tRNA(Phe) + L-phenylalanine + ATP = L-phenylalanyl-tRNA(Phe) + AMP + diphosphate + H(+). This is Phenylalanine--tRNA ligase alpha subunit from Colwellia psychrerythraea (strain 34H / ATCC BAA-681) (Vibrio psychroerythus).